A 251-amino-acid chain; its full sequence is tRNA (guanine-N(1)-)-methyltransferase (251 aa).

Residues Gly113 and 133 to 138 (IGDYVL) each bind S-adenosyl-L-methionine.

The protein belongs to the RNA methyltransferase TrmD family. In terms of assembly, homodimer.

The protein resides in the cytoplasm. It carries out the reaction guanosine(37) in tRNA + S-adenosyl-L-methionine = N(1)-methylguanosine(37) in tRNA + S-adenosyl-L-homocysteine + H(+). Functionally, specifically methylates guanosine-37 in various tRNAs. This is tRNA (guanine-N(1)-)-methyltransferase from Pectobacterium carotovorum subsp. carotovorum (strain PC1).